Here is a 188-residue protein sequence, read N- to C-terminus: Small ribosomal subunit protein uS7 (188 aa).

Belongs to the universal ribosomal protein uS7 family. In terms of assembly, part of the 30S ribosomal subunit.

Functionally, one of the primary rRNA binding proteins, it binds directly to 16S rRNA where it nucleates assembly of the head domain of the 30S subunit. Is located at the subunit interface close to the decoding center. In Methanococcus maripaludis (strain C7 / ATCC BAA-1331), this protein is Small ribosomal subunit protein uS7.